The chain runs to 250 residues: Small ribosomal subunit protein uS3 (250 aa).

In terms of domain architecture, KH type-2 spans 39-111 (IRTLIKNHYP…KVQINIFEVK (73 aa)).

The protein belongs to the universal ribosomal protein uS3 family. As to quaternary structure, part of the 30S ribosomal subunit. Forms a tight complex with proteins S10 and S14.

Its function is as follows. Binds the lower part of the 30S subunit head. Binds mRNA in the 70S ribosome, positioning it for translation. This Rubus stunt phytoplasma protein is Small ribosomal subunit protein uS3.